Here is a 68-residue protein sequence, read N- to C-terminus: Protein SlyX homolog (68 aa).

It belongs to the SlyX family.

In Pseudomonas fluorescens (strain ATCC BAA-477 / NRRL B-23932 / Pf-5), this protein is Protein SlyX homolog.